We begin with the raw amino-acid sequence, 99 residues long: HssA/B-like protein 42 (99 aa).

The disordered stretch occupies residues 1 to 29 (MTLFSSISSMSTSMSGSKSSISSFGSGTS).

The protein belongs to the hssA/B family.

In Dictyostelium discoideum (Social amoeba), this protein is HssA/B-like protein 42 (hssl42).